The following is a 252-amino-acid chain: MSKFEDIRGVAFDLDGTLVDSAPGLAAAVDMALYALELPVAGEERVITWIGNGADVLMERALTWARQERATLRKTMGKPPVDDDIPAEEQVRILRKLFDRYYGEVAEEGTFLFPHVADTLGALQAKGLPLGLVTNKPTPFVAPLLEALDIAKYFSVVIGGDDVQNKKPHPDPLLLVAERMGIAPQQMLFVGDSRNDIQAAKAAGCPSVGLTYGYNYGEAIDLSQPDVIYQSINDLLPALGLPHSENQESKND.

Asp13 functions as the Nucleophile in the catalytic mechanism. Mg(2+) is bound by residues Asp13, Asp15, and Asp192.

It belongs to the HAD-like hydrolase superfamily. CbbY/CbbZ/Gph/YieH family. As to quaternary structure, monomer. Mg(2+) serves as cofactor. It depends on chloride as a cofactor.

It catalyses the reaction 2-phosphoglycolate + H2O = glycolate + phosphate. It functions in the pathway organic acid metabolism; glycolate biosynthesis; glycolate from 2-phosphoglycolate: step 1/1. Its function is as follows. Specifically catalyzes the dephosphorylation of 2-phosphoglycolate. Is involved in the dissimilation of the intracellular 2-phosphoglycolate formed during the DNA repair of 3'-phosphoglycolate ends, a major class of DNA lesions induced by oxidative stress. The chain is Phosphoglycolate phosphatase from Escherichia coli O157:H7.